The sequence spans 149 residues: Transcriptional repressor NrdR (149 aa).

A zinc finger lies at 3–34 (CPFCAAEETKVVDSRLAADGYQIRRRRECTSC). Positions 49 to 139 (PYVIKNNGNR…VYLSFDDIEE (91 aa)) constitute an ATP-cone domain.

It belongs to the NrdR family. Zn(2+) serves as cofactor.

Negatively regulates transcription of bacterial ribonucleotide reductase nrd genes and operons by binding to NrdR-boxes. The polypeptide is Transcriptional repressor NrdR (Actinobacillus pleuropneumoniae serotype 3 (strain JL03)).